We begin with the raw amino-acid sequence, 163 residues long: Peptide methionine sulfoxide reductase MsrA (163 aa).

Cys10 is a catalytic residue.

It belongs to the MsrA Met sulfoxide reductase family.

It catalyses the reaction L-methionyl-[protein] + [thioredoxin]-disulfide + H2O = L-methionyl-(S)-S-oxide-[protein] + [thioredoxin]-dithiol. The enzyme catalyses [thioredoxin]-disulfide + L-methionine + H2O = L-methionine (S)-S-oxide + [thioredoxin]-dithiol. Functionally, has an important function as a repair enzyme for proteins that have been inactivated by oxidation. Catalyzes the reversible oxidation-reduction of methionine sulfoxide in proteins to methionine. In Vesicomyosocius okutanii subsp. Calyptogena okutanii (strain HA), this protein is Peptide methionine sulfoxide reductase MsrA.